Here is a 243-residue protein sequence, read N- to C-terminus: MSLFNLPKVDLGEDCEGGVUARPSSSSSSINNASDESTPLISKTNDEEKANIGISSTSNSPQEEQTKKPLFISILTLLISIPALVGSUCWPVLIASLSGVAVSAGSVELAHSLTFAITLSILSNLAQYHFHKCKKRPSDRGHWIKFGPFYLTAIAVPLATFDILRHILVDNSIWTIHSFISPAAYRPGCENENITCLSVMGWFSAIVFTYTGYACLLVGTIWAADLIPKIKKVWTQLRPSKKN.

Residues 12 to 63 (GEDCEGGVUARPSSSSSSINNASDESTPLISKTNDEEKANIGISSTSNSPQE) are disordered. Sec20 is a non-standard amino acid (selenocysteine). Polar residues-rich tracts occupy residues 30–43 (INNA…LISK) and 53–63 (GISSTSNSPQE). A run of 4 helical transmembrane segments spans residues 74–94 (ILTL…PVLI), 102–122 (VSAG…LSIL), 144–164 (IKFG…FDIL), and 199–219 (VMGW…LLVG). A non-standard amino acid (selenocysteine) is located at residue Sec88.

Its subcellular location is the membrane. The polypeptide is Membrane selenoprotein (msp) (Dictyostelium discoideum (Social amoeba)).